The sequence spans 348 residues: UPF0283 membrane protein PBPRA2435 (348 aa).

Transmembrane regions (helical) follow at residues 71–91 (GLLI…VVSA), 97–117 (WLAL…ITAL), and 211–231 (EAAV…LVAW).

This sequence belongs to the UPF0283 family.

Its subcellular location is the cell inner membrane. This is UPF0283 membrane protein PBPRA2435 from Photobacterium profundum (strain SS9).